The primary structure comprises 486 residues: Glucose-6-phosphate 1-dehydrogenase (486 aa).

NADP(+)-binding positions include Gly13 to Lys20, Arg47, Asp86 to Val87, and Lys149. 4 residues coordinate substrate: His179, Lys183, Glu217, and Asp236. His241 acts as the Proton acceptor in catalysis. Positions 339 and 344 each coordinate substrate.

The protein belongs to the glucose-6-phosphate dehydrogenase family. In terms of assembly, homodimer.

It carries out the reaction D-glucose 6-phosphate + NAD(+) = 6-phospho-D-glucono-1,5-lactone + NADH + H(+). It catalyses the reaction D-glucose 6-phosphate + NADP(+) = 6-phospho-D-glucono-1,5-lactone + NADPH + H(+). The protein operates within carbohydrate degradation; pentose phosphate pathway; D-ribulose 5-phosphate from D-glucose 6-phosphate (oxidative stage): step 1/3. Its function is as follows. Catalyzes the oxidation of glucose 6-phosphate to 6-phosphogluconolactone. Can utilize either NADP(+) or NAD(+). The chain is Glucose-6-phosphate 1-dehydrogenase from Leuconostoc mesenteroides.